The sequence spans 1535 residues: Putative protein TIC 214 C-terminal part (1535 aa).

3 disordered regions span residues 264 to 283 (ENQK…NSND), 312 to 333 (EQQE…SRKA), and 1263 to 1282 (DYKE…KNNK).

It belongs to the TIC214 family. In terms of assembly, part of the Tic complex.

It localises to the plastid. The protein resides in the chloroplast. In terms of biological role, involved in protein precursor import into chloroplasts. May be part of an intermediate translocation complex acting as a protein-conducting channel at the inner envelope. In Piper cenocladum (Ant piper), this protein is Putative protein TIC 214 C-terminal part.